The primary structure comprises 216 residues: Octanoyltransferase (216 aa).

Residues 33-216 (AQTADELWIV…AEKLTRHLSG (184 aa)) form the BPL/LPL catalytic domain. Substrate-binding positions include 72–79 (RGGEVTYH), 148–150 (ALG), and 162–164 (GVS). Cys-180 functions as the Acyl-thioester intermediate in the catalytic mechanism.

The protein belongs to the LipB family.

Its subcellular location is the cytoplasm. It catalyses the reaction octanoyl-[ACP] + L-lysyl-[protein] = N(6)-octanoyl-L-lysyl-[protein] + holo-[ACP] + H(+). It functions in the pathway protein modification; protein lipoylation via endogenous pathway; protein N(6)-(lipoyl)lysine from octanoyl-[acyl-carrier-protein]: step 1/2. Functionally, catalyzes the transfer of endogenously produced octanoic acid from octanoyl-acyl-carrier-protein onto the lipoyl domains of lipoate-dependent enzymes. Lipoyl-ACP can also act as a substrate although octanoyl-ACP is likely to be the physiological substrate. This is Octanoyltransferase from Herminiimonas arsenicoxydans.